A 1325-amino-acid polypeptide reads, in one-letter code: SCAN domain-containing protein 3 (1325 aa).

The SCAN box domain maps to 52–134 (RQRFRQFCYQ…TLLEDLEREL (83 aa)). Residues 246–275 (KAKYCQLIKEVKEAKAKAKKESVDYRRLAR) are a coiled coil. In terms of domain architecture, Integrase catalytic spans 366 to 526 (KSIKEVSSRC…TPCESAFSSE (161 aa)). A coiled-coil region spans residues 542–568 (ASLHTENELDQADKELENTLRAQYEEN).

Weakly expressed in the lung (at protein level).

It localises to the nucleus. This Homo sapiens (Human) protein is SCAN domain-containing protein 3.